The primary structure comprises 327 residues: Ferrochelatase (327 aa).

Positions 196 and 277 each coordinate Fe cation.

It belongs to the ferrochelatase family.

It is found in the cytoplasm. It catalyses the reaction heme b + 2 H(+) = protoporphyrin IX + Fe(2+). It functions in the pathway porphyrin-containing compound metabolism; protoheme biosynthesis; protoheme from protoporphyrin-IX: step 1/1. In terms of biological role, catalyzes the ferrous insertion into protoporphyrin IX. In Gloeobacter violaceus (strain ATCC 29082 / PCC 7421), this protein is Ferrochelatase.